The following is a 169-amino-acid chain: MAAFLLRHVSRHCLRAHLNAQLCIRNAAPLGTTAKEEMERFWKKNTSSNRPLSPHLTIYKWSLPMALSVCHRGSGIALSGGVSLFGLSALLLPGNFESYLMFVKSLCLGPTLIYSAKFVLVFPLMYHSLNGIRHLLWDLGKGLAIPQVWLSGVAVVVLAVLSSGGLAAL.

The N-terminal 29 residues, 1-29 (MAAFLLRHVSRHCLRAHLNAQLCIRNAAP), are a transit peptide targeting the mitochondrion. Residues 30 to 62 (LGTTAKEEMERFWKKNTSSNRPLSPHLTIYKWS) are Mitochondrial matrix-facing. A helical membrane pass occupies residues 63–92 (LPMALSVCHRGSGIALSGGVSLFGLSALLL). Residues 93 to 112 (PGNFESYLMFVKSLCLGPTL) are Mitochondrial intermembrane-facing. Residues 113–137 (IYSAKFVLVFPLMYHSLNGIRHLLW) traverse the membrane as a helical segment. His127 contacts heme b. Residues 138 to 144 (DLGKGLA) lie on the Mitochondrial matrix side of the membrane. Residues 145 to 166 (IPQVWLSGVAVVVLAVLSSGGL) traverse the membrane as a helical segment. Residues 167–169 (AAL) lie on the Mitochondrial intermembrane side of the membrane.

This sequence belongs to the cytochrome b560 family. Component of complex II composed of four subunits: the flavoprotein (FP) SDHA, iron-sulfur protein (IP) SDHB, and a cytochrome b560 composed of SDHC and SDHD. Requires heme b as cofactor.

It localises to the mitochondrion inner membrane. It participates in carbohydrate metabolism; tricarboxylic acid cycle. In terms of biological role, membrane-anchoring subunit of succinate dehydrogenase (SDH) that is involved in complex II of the mitochondrial electron transport chain and is responsible for transferring electrons from succinate to ubiquinone (coenzyme Q). SDH also oxidizes malate to the non-canonical enol form of oxaloacetate, enol-oxaloacetate. Enol-oxaloacetate, which is a potent inhibitor of the succinate dehydrogenase activity, is further isomerized into keto-oxaloacetate. The sequence is that of Succinate dehydrogenase cytochrome b560 subunit, mitochondrial (Sdhc) from Mus musculus (Mouse).